The following is a 234-amino-acid chain: Probable glycerol uptake facilitator protein (234 aa).

Transmembrane regions (helical) follow at residues 3–23 (VYLA…GVVA) and 36–56 (GWIV…YLVG). The NPA 1 signature appears at 64–66 (NPA). 3 consecutive transmembrane segments (helical) span residues 82-102 (VPGY…LVYL), 134-154 (LLTE…IGAN), and 164-184 (LVGF…GYAI). The NPA 2 signature appears at 185–187 (NPA). Residues 214 to 234 (VPIIGPIIGGILGASLYNWLF) form a helical membrane-spanning segment.

This sequence belongs to the MIP/aquaporin (TC 1.A.8) family.

The protein resides in the cell membrane. It catalyses the reaction glycerol(in) = glycerol(out). Mediates glycerol diffusion across the cytoplasmic membrane via a pore-type mechanism. This Thermotoga maritima (strain ATCC 43589 / DSM 3109 / JCM 10099 / NBRC 100826 / MSB8) protein is Probable glycerol uptake facilitator protein (glpF).